The following is a 266-amino-acid chain: 4-hydroxy-tetrahydrodipicolinate reductase (266 aa).

Residue 10–15 (GPRGRM) coordinates NAD(+). Residue lysine 38 coordinates NADP(+). NAD(+) contacts are provided by residues 99 to 101 (GTT) and 125 to 128 (APNF). Histidine 155 acts as the Proton donor/acceptor in catalysis. Residue histidine 156 participates in (S)-2,3,4,5-tetrahydrodipicolinate binding. The Proton donor role is filled by lysine 159. 165 to 166 (GT) contributes to the (S)-2,3,4,5-tetrahydrodipicolinate binding site.

Belongs to the DapB family.

The protein localises to the cytoplasm. The catalysed reaction is (S)-2,3,4,5-tetrahydrodipicolinate + NAD(+) + H2O = (2S,4S)-4-hydroxy-2,3,4,5-tetrahydrodipicolinate + NADH + H(+). It catalyses the reaction (S)-2,3,4,5-tetrahydrodipicolinate + NADP(+) + H2O = (2S,4S)-4-hydroxy-2,3,4,5-tetrahydrodipicolinate + NADPH + H(+). The protein operates within amino-acid biosynthesis; L-lysine biosynthesis via DAP pathway; (S)-tetrahydrodipicolinate from L-aspartate: step 4/4. Catalyzes the conversion of 4-hydroxy-tetrahydrodipicolinate (HTPA) to tetrahydrodipicolinate. In Bacillus cytotoxicus (strain DSM 22905 / CIP 110041 / 391-98 / NVH 391-98), this protein is 4-hydroxy-tetrahydrodipicolinate reductase.